The primary structure comprises 461 residues: Bifunctional protein GlmU (461 aa).

The interval 1 to 229 is pyrophosphorylase; the sequence is MNKYVVILAA…FSESLGVNDR (229 aa). Residues 8–11, Lys22, Gln72, and 77–78 contribute to the UDP-N-acetyl-alpha-D-glucosamine site; these read LAAG and GT. Asp102 contacts Mg(2+). UDP-N-acetyl-alpha-D-glucosamine-binding residues include Gly139, Glu154, Asn169, and Asn227. Residue Asn227 participates in Mg(2+) binding. Residues 230 to 250 form a linker region; it reads IALAQATKIMQRRINEEHMRN. The tract at residues 251-461 is N-acetyltransferase; it reads GVSFIDPDTA…LPLAKDKEWE (211 aa). Residues Arg332 and Lys350 each contribute to the UDP-N-acetyl-alpha-D-glucosamine site. The active-site Proton acceptor is His362. UDP-N-acetyl-alpha-D-glucosamine contacts are provided by Tyr365 and Asn376. Acetyl-CoA is bound by residues 385–386, Ala422, and Arg439; that span reads NY.

The protein in the N-terminal section; belongs to the N-acetylglucosamine-1-phosphate uridyltransferase family. It in the C-terminal section; belongs to the transferase hexapeptide repeat family. As to quaternary structure, homotrimer. Mg(2+) is required as a cofactor.

The protein resides in the cytoplasm. It carries out the reaction alpha-D-glucosamine 1-phosphate + acetyl-CoA = N-acetyl-alpha-D-glucosamine 1-phosphate + CoA + H(+). The catalysed reaction is N-acetyl-alpha-D-glucosamine 1-phosphate + UTP + H(+) = UDP-N-acetyl-alpha-D-glucosamine + diphosphate. It participates in nucleotide-sugar biosynthesis; UDP-N-acetyl-alpha-D-glucosamine biosynthesis; N-acetyl-alpha-D-glucosamine 1-phosphate from alpha-D-glucosamine 6-phosphate (route II): step 2/2. It functions in the pathway nucleotide-sugar biosynthesis; UDP-N-acetyl-alpha-D-glucosamine biosynthesis; UDP-N-acetyl-alpha-D-glucosamine from N-acetyl-alpha-D-glucosamine 1-phosphate: step 1/1. The protein operates within bacterial outer membrane biogenesis; LPS lipid A biosynthesis. Its function is as follows. Catalyzes the last two sequential reactions in the de novo biosynthetic pathway for UDP-N-acetylglucosamine (UDP-GlcNAc). The C-terminal domain catalyzes the transfer of acetyl group from acetyl coenzyme A to glucosamine-1-phosphate (GlcN-1-P) to produce N-acetylglucosamine-1-phosphate (GlcNAc-1-P), which is converted into UDP-GlcNAc by the transfer of uridine 5-monophosphate (from uridine 5-triphosphate), a reaction catalyzed by the N-terminal domain. This is Bifunctional protein GlmU from Lactobacillus johnsonii (strain CNCM I-12250 / La1 / NCC 533).